The following is a 916-amino-acid chain: Oxysterol-binding protein 2 (916 aa).

Disordered regions lie at residues 1–20 (MGKA…SRGL), 34–121 (TAAP…PFTK), and 139–163 (PESG…TPLG). The span at 49 to 58 (EPKPQPQPVP) shows a compositional bias: pro residues. Positions 79 to 92 (RSEPVSETTSEPEP) are enriched in low complexity. Residues 99–113 (ELLQGSRPGSESSSG) are compositionally biased toward polar residues. Residues 144–155 (LPALKPLPLLRP) show a composition bias toward low complexity. Residues 182–274 (LDSFEGWLLK…WITALELAKA (93 aa)) form the PH domain. 2 disordered regions span residues 282 to 301 (THSD…DKSE) and 417 to 448 (FHSA…EEDE). Ser-287 bears the Phosphoserine mark. Phosphoserine is present on Ser-763. Positions 813-842 (EGVAPTDSRLRPDQRLMEKGRWDEANTEKQ) are disordered.

It belongs to the OSBP family. As to quaternary structure, interacts with CCDC159. Expressed mainly in retina, testis, and fetal liver.

Its subcellular location is the membrane. The protein resides in the cytoplasmic vesicle. It is found in the secretory vesicle. It localises to the acrosome. Its function is as follows. Binds 7-ketocholesterol. Acts during spermatid development where its function is required prior to the removal of cytoplasm from the sperm head. In Homo sapiens (Human), this protein is Oxysterol-binding protein 2 (OSBP2).